Here is a 244-residue protein sequence, read N- to C-terminus: Dihydropteridine reductase (244 aa).

Ala2 carries the post-translational modification N-acetylalanine. 14–38 contacts NADP(+); that stretch reads LVYGGRGALGSRCVQAFRARNWWVA. N6-succinyllysine occurs at positions 73, 79, 96, and 102. The Proton acceptor role is filled by Tyr150.

This sequence belongs to the short-chain dehydrogenases/reductases (SDR) family. Homodimer.

The enzyme catalyses 5,6,7,8-tetrahydropteridine + NAD(+) = 6,7-dihydropteridine + NADH + H(+). It carries out the reaction 5,6,7,8-tetrahydropteridine + NADP(+) = 6,7-dihydropteridine + NADPH + H(+). Catalyzes the conversion of quinonoid dihydrobiopterin into tetrahydrobiopterin. The protein is Dihydropteridine reductase (QDPR) of Homo sapiens (Human).